Here is a 344-residue protein sequence, read N- to C-terminus: Protein pelota homolog (344 aa).

Belongs to the eukaryotic release factor 1 family. Pelota subfamily. Monomer. The cofactor is a divalent metal cation.

It is found in the cytoplasm. May function in recognizing stalled ribosomes, interact with stem-loop structures in stalled mRNA molecules, and effect endonucleolytic cleavage of the mRNA. May play a role in the release non-functional ribosomes and degradation of damaged mRNAs. Has endoribonuclease activity. This Saccharolobus islandicus (strain M.16.27) (Sulfolobus islandicus) protein is Protein pelota homolog.